The following is a 520-amino-acid chain: MNTTVSNQTPHIRIFDTTLRDGEQSPGCSMTPQQKLVMARALDALGVDIIETGFPASSYSDREAVAMMGRELRRPTLAVLSRCLQADIEISARALEAAANPRLHVFLSTSPLHREHKLRMSREQVLESVHKHVTLARGYIDDIEFSAEDATRTEEDFLAEVTRVAIAAGATTINLPDTVGFTTPEEIRGMFSRLIASVEGAEKVIFSTHCHNDLGLAAANSLAAIEGGARQVECTINGIGERAGNCALEEITMALKVRGAFYNLDTAINTPRIVSTSQLLQRLVGMPVQRNKAVVGGNAFAHESGIHQHGMLRHRGTYEIMRPEDVGWESSQMVLGRHSGRAAVEQRLRALGYLLEEDEAKLVFEQFKALCEKQRVVTDADLQALMQDATVQEGYRLASMTISDVGSRANALVELSDPDGNRVAETAQGNGPVDALFGALASATGVKLELDSYQVHSVGIGADARGEASLSVRHDGVEYEGTGTSKDIIEASALAWLDVANRLLRQRERGVVAGKTAAVA.

The 263-residue stretch at 12 to 274 (IRIFDTTLRD…DTAINTPRIV (263 aa)) folds into the Pyruvate carboxyltransferase domain. Mn(2+) is bound by residues Asp21, His209, His211, and Asn245. The segment at 396 to 520 (RLASMTISDV…VVAGKTAAVA (125 aa)) is regulatory domain.

It belongs to the alpha-IPM synthase/homocitrate synthase family. LeuA type 1 subfamily. As to quaternary structure, homodimer. The cofactor is Mn(2+).

The protein localises to the cytoplasm. It catalyses the reaction 3-methyl-2-oxobutanoate + acetyl-CoA + H2O = (2S)-2-isopropylmalate + CoA + H(+). It functions in the pathway amino-acid biosynthesis; L-leucine biosynthesis; L-leucine from 3-methyl-2-oxobutanoate: step 1/4. Its function is as follows. Catalyzes the condensation of the acetyl group of acetyl-CoA with 3-methyl-2-oxobutanoate (2-ketoisovalerate) to form 3-carboxy-3-hydroxy-4-methylpentanoate (2-isopropylmalate). The protein is 2-isopropylmalate synthase of Xanthomonas campestris pv. campestris (strain B100).